Consider the following 268-residue polypeptide: Ribosomal RNA small subunit methyltransferase A (268 aa).

Residues Asn-18, Leu-20, Gly-45, Glu-66, Asp-91, and Asn-112 each coordinate S-adenosyl-L-methionine.

Belongs to the class I-like SAM-binding methyltransferase superfamily. rRNA adenine N(6)-methyltransferase family. RsmA subfamily.

The protein localises to the cytoplasm. It carries out the reaction adenosine(1518)/adenosine(1519) in 16S rRNA + 4 S-adenosyl-L-methionine = N(6)-dimethyladenosine(1518)/N(6)-dimethyladenosine(1519) in 16S rRNA + 4 S-adenosyl-L-homocysteine + 4 H(+). Its function is as follows. Specifically dimethylates two adjacent adenosines (A1518 and A1519) in the loop of a conserved hairpin near the 3'-end of 16S rRNA in the 30S particle. May play a critical role in biogenesis of 30S subunits. The protein is Ribosomal RNA small subunit methyltransferase A of Shewanella baltica (strain OS185).